The following is a 606-amino-acid chain: Probable potassium transport system protein Kup 2 (606 aa).

A run of 12 helical transmembrane segments spans residues 18–38, 46–66, 97–117, 140–160, 169–189, 204–224, 247–267, 286–306, 339–359, 368–388, 395–415, and 418–438; these read GLVF…IMTL, VLGI…VEYA, VAFV…DGII, AQGV…IFQF, AFGP…IVSI, AVTF…EVIL, AWYF…AFIL, ILYI…SQAL, IYIG…MLIF, AYGL…TMIF, WKVP…TANF, and LPHG…IMII.

It belongs to the HAK/KUP transporter (TC 2.A.72) family.

Its subcellular location is the cell inner membrane. It catalyses the reaction K(+)(in) + H(+)(in) = K(+)(out) + H(+)(out). Functionally, transport of potassium into the cell. Likely operates as a K(+):H(+) symporter. In Geobacter metallireducens (strain ATCC 53774 / DSM 7210 / GS-15), this protein is Probable potassium transport system protein Kup 2.